We begin with the raw amino-acid sequence, 241 residues long: Sugar fermentation stimulation protein homolog (241 aa).

The protein belongs to the SfsA family.

In Trichormus variabilis (strain ATCC 29413 / PCC 7937) (Anabaena variabilis), this protein is Sugar fermentation stimulation protein homolog.